We begin with the raw amino-acid sequence, 129 residues long: Prefoldin subunit 4 (129 aa).

Position 1 is an N-acetylmethionine (M1).

It belongs to the prefoldin subunit beta family. In terms of assembly, heterohexamer of two PFD-alpha type and four PFD-beta type subunits.

Binds specifically to cytosolic chaperonin (c-CPN) and transfers target proteins to it. Binds to nascent polypeptide chain and promotes folding in an environment in which there are many competing pathways for nonnative proteins. The polypeptide is Prefoldin subunit 4 (GIM3) (Saccharomyces cerevisiae (strain ATCC 204508 / S288c) (Baker's yeast)).